The primary structure comprises 408 residues: MDKLLERFLNYVSLDTQSKAGVRQVPSTEGQWKLLHLLKEQLEEMGLINVTLSEKGTLMATLPANVPGDIPAIGFISHVDTSPDCSGKNVNPQIVENYRGGDIALGIGDEVLSPVMFPVLHQLLGQTLITTDGKTLLGADDKAGIAEIMTALAVLQQKNIPHGDIRVAFTPDEEVGKGAKHFDVDAFDARWAYTVDGGGVGELEFENFNAASVNIKIVGNNVHPGTAKGVMVNALSLAARIHAEVPADESPEMTEGYEGFYHLASMKGTVERADMHYIIRDFDRKQFEARKRKMMEIAKKVGKGLHPDCYIELVIEDSYYNMREKVVEHPHILDIAQQAMRDCDIEPELKPIRGGTDGAQLSFMGLPCPNLFTGGYNYHGKHEFVILEGMEKAVQVIVRIAELTAQRK.

Position 78 (His78) interacts with Zn(2+). The active site involves Asp80. Asp140 contributes to the Zn(2+) binding site. Glu173 acts as the Proton acceptor in catalysis. Residues Glu174, Asp196, and His379 each coordinate Zn(2+).

This sequence belongs to the peptidase M20B family. It depends on Zn(2+) as a cofactor.

The protein localises to the cytoplasm. It catalyses the reaction Release of the N-terminal residue from a tripeptide.. Cleaves the N-terminal amino acid of tripeptides. The chain is Peptidase T from Shigella flexneri serotype 5b (strain 8401).